We begin with the raw amino-acid sequence, 583 residues long: Radixin (583 aa).

An FERM domain is found at 5–295; sequence INVRVTTMDA…GNHELYMRRR (291 aa). An a 1,2-diacyl-sn-glycero-3-phospho-(1D-myo-inositol)-binding site is contributed by 60–63; sequence KLNK. At lysine 83 the chain carries N6-succinyllysine. Lysine 278 contacts a 1,2-diacyl-sn-glycero-3-phospho-(1D-myo-inositol). Disordered regions lie at residues 310–336, 374–407, and 458–526; these read REEK…AEKE, ELDQ…AKQA, and KTKE…RVNK. Over residues 374-400 the composition is skewed to basic and acidic residues; sequence ELDQERKRAKEEAERLEKERRAAEEAK. A compositionally biased stretch (pro residues) spans 469–480; that stretch reads APPPPPPPPVVP. 2 stretches are compositionally biased toward basic and acidic residues: residues 483 to 492 and 506 to 525; these read ENEHDEHDEN and MNHR…ERVN. Threonine 564 carries the phosphothreonine; by ROCK2 modification.

Interacts with CPNE1 (via VWFA domain) and CPNE4 (via VWFA domain). Binds NHERF1. Interacts with NHERF1, NHERF2, LAYN, MME/NEP and ICAM2. Interacts (via FERM domain) with SPN/CD43 cytoplasmic tail. Interacts with CD44. Interacts with CLIC5; may work together in a complex which also includes EZR and MYO6 to stabilize linkages between the plasma membrane and subjacent actin cytoskeleton at the base of stereocilia. Post-translationally, phosphorylated by tyrosine-protein kinases. Phosphorylation by ROCK2 suppresses the head-to-tail association of the N-terminal and C-terminal halves resulting in an opened conformation which is capable of actin and membrane-binding.

The protein resides in the cell membrane. The protein localises to the cytoplasm. It localises to the cytoskeleton. Its subcellular location is the cleavage furrow. It is found in the cell projection. The protein resides in the microvillus. The protein localises to the stereocilium. Its activity is regulated as follows. A head-to-tail association, of the N-terminal and C-terminal halves results in a closed conformation (inactive form) which is incapable of actin or membrane-binding. Functionally, probably plays a crucial role in the binding of the barbed end of actin filaments to the plasma membrane. This Sus scrofa (Pig) protein is Radixin (RDX).